The chain runs to 175 residues: Nucleoside triphosphate/diphosphate phosphatase (175 aa).

The Proton donor role is filled by arginine 23. 6 residues coordinate Mg(2+): asparagine 87, aspartate 103, aspartate 105, aspartate 107, aspartate 120, and glutamate 123.

This sequence belongs to the Ntdp family. Mg(2+) is required as a cofactor.

The enzyme catalyses a ribonucleoside 5'-triphosphate + H2O = a ribonucleoside 5'-diphosphate + phosphate + H(+). The catalysed reaction is a ribonucleoside 5'-diphosphate + H2O = a ribonucleoside 5'-phosphate + phosphate + H(+). In terms of biological role, has nucleoside phosphatase activity towards nucleoside triphosphates and nucleoside diphosphates. This is Nucleoside triphosphate/diphosphate phosphatase from Shouchella clausii (strain KSM-K16) (Alkalihalobacillus clausii).